The following is a 257-amino-acid chain: Probable septum site-determining protein MinC (257 aa).

A compositionally biased stretch (low complexity) spans 123–141 (AVEAAAAPAAEPTPEPGAA). Residues 123–144 (AVEAAAAPAAEPTPEPGAASQP) form a disordered region.

Belongs to the MinC family. In terms of assembly, interacts with MinD and FtsZ.

In terms of biological role, cell division inhibitor that blocks the formation of polar Z ring septums. Rapidly oscillates between the poles of the cell to destabilize FtsZ filaments that have formed before they mature into polar Z rings. Prevents FtsZ polymerization. This chain is Probable septum site-determining protein MinC, found in Burkholderia multivorans (strain ATCC 17616 / 249).